The sequence spans 501 residues: Lysine--tRNA ligase (501 aa).

The Mg(2+) site is built by Glu-412 and Glu-419.

This sequence belongs to the class-II aminoacyl-tRNA synthetase family. In terms of assembly, homodimer. It depends on Mg(2+) as a cofactor.

The protein localises to the cytoplasm. The enzyme catalyses tRNA(Lys) + L-lysine + ATP = L-lysyl-tRNA(Lys) + AMP + diphosphate. This Pasteurella multocida (strain Pm70) protein is Lysine--tRNA ligase (lysS).